Consider the following 445-residue polypeptide: Chromosomal replication initiator protein DnaA (445 aa).

Residues 1–69 (MEKIWLEAQS…IEAISSLTNI (69 aa)) form a domain I, interacts with DnaA modulators region. Positions 69 to 108 (IKYQVDFKITEKSQVEKKKVDLQATEKIENDSTRNVDFNT) are domain II. A domain III, AAA+ region region spans residues 109 to 325 (NLNPKYTFDS…GMLIRLGAYA (217 aa)). ATP contacts are provided by glycine 153, glycine 155, lysine 156, and threonine 157. Positions 326 to 445 (SLTGSEISLN…VEKMKKELMS (120 aa)) are domain IV, binds dsDNA.

It belongs to the DnaA family. In terms of assembly, oligomerizes as a right-handed, spiral filament on DNA at oriC.

The protein localises to the cytoplasm. Functionally, plays an essential role in the initiation and regulation of chromosomal replication. ATP-DnaA binds to the origin of replication (oriC) to initiate formation of the DNA replication initiation complex once per cell cycle. Binds the DnaA box (a 9 base pair repeat at the origin) and separates the double-stranded (ds)DNA. Forms a right-handed helical filament on oriC DNA; dsDNA binds to the exterior of the filament while single-stranded (ss)DNA is stabiized in the filament's interior. The ATP-DnaA-oriC complex binds and stabilizes one strand of the AT-rich DNA unwinding element (DUE), permitting loading of DNA polymerase. After initiation quickly degrades to an ADP-DnaA complex that is not apt for DNA replication. Binds acidic phospholipids. The polypeptide is Chromosomal replication initiator protein DnaA (Geotalea daltonii (strain DSM 22248 / JCM 15807 / FRC-32) (Geobacter daltonii)).